The chain runs to 315 residues: DNA-directed RNA polymerase subunit alpha (315 aa).

The interval M1–S228 is alpha N-terminal domain (alpha-NTD). The interval I238–S315 is alpha C-terminal domain (alpha-CTD).

Belongs to the RNA polymerase alpha chain family. In terms of assembly, in cyanobacteria the RNAP catalytic core is composed of 2 alpha, 1 beta, 1 beta', 1 gamma and 1 omega subunit. When a sigma factor is associated with the core the holoenzyme is formed, which can initiate transcription.

The enzyme catalyses RNA(n) + a ribonucleoside 5'-triphosphate = RNA(n+1) + diphosphate. DNA-dependent RNA polymerase catalyzes the transcription of DNA into RNA using the four ribonucleoside triphosphates as substrates. This Trichormus variabilis (strain ATCC 29413 / PCC 7937) (Anabaena variabilis) protein is DNA-directed RNA polymerase subunit alpha.